A 1431-amino-acid polypeptide reads, in one-letter code: Caskin-1 (1431 aa).

ANK repeat units lie at residues Asp-48–Ile-77, Lys-81–Val-110, Glu-114–Met-143, Ser-147–Leu-176, Asn-188–Arg-217, and Lys-220–Val-249. Tyr-253 carries the phosphotyrosine modification. In terms of domain architecture, SH3 spans Ser-281–Lys-347. Residues Arg-348–Pro-372 form a disordered region. Position 358 is a phosphoserine (Ser-358). The CASK-binding stretch occupies residues Ile-375–Ser-471. Omega-N-methylarginine is present on Arg-398. A compositionally biased stretch (polar residues) spans Ser-420–Gly-430. The segment at Ser-420–Ser-471 is disordered. Residues Ser-423 and Ser-432 each carry the phosphoserine modification. SAM domains lie at Lys-476 to Pro-539 and His-545 to Leu-609. Phosphoserine is present on residues Ser-637 and Ser-650. Over residues Leu-669–Ala-679 the composition is skewed to low complexity. Disordered stretches follow at residues Leu-669–Ala-1000 and Gly-1016–Arg-1041. The span at Arg-692–Glu-712 shows a compositional bias: polar residues. A phosphoserine mark is found at Ser-723 and Ser-728. Thr-741 carries the post-translational modification Phosphothreonine. Ser-791 is subject to Phosphoserine. A compositionally biased stretch (pro residues) spans Pro-848 to Ala-860. Ser-891, Ser-893, and Ser-989 each carry phosphoserine. A compositionally biased stretch (pro residues) spans Gly-1028 to Pro-1037. Thr-1067 bears the Phosphothreonine mark. Ser-1069 carries the phosphoserine modification. Disordered regions lie at residues Val-1072–Leu-1372 and Lys-1389–Ser-1410. A compositionally biased stretch (basic and acidic residues) spans Asp-1148–Asp-1160. The span at Pro-1191 to Leu-1215 shows a compositional bias: pro residues. Residues Gln-1236 to Pro-1247 are compositionally biased toward polar residues. Phosphoserine is present on Ser-1259. Phosphothreonine is present on Thr-1268. Pro residues predominate over residues Thr-1268 to Pro-1283. Low complexity-rich tracts occupy residues Lys-1284–Pro-1299, Pro-1309–Pro-1327, and Pro-1345–Ser-1359. Position 1363 is a phosphoserine (Ser-1363). A compositionally biased stretch (basic and acidic residues) spans Lys-1389 to Ser-1407.

As to quaternary structure, binds the CaM kinase domain of CASK. Forms a ternary complex with CASK and LIN7A, LIN7B or LIN7C. Competes with APBA1 that forms a similar complex with CASK and LIN7 proteins. The tripartite complex CASKIN1/CASK/LIN7(A/B/C) binds the cytoplasmic tail of NRXN1. Polymerizes, via the tandem SAM domains, to form long, 8 nM wide fibers, upon which other proteins can assemble.

It localises to the cytoplasm. May link the scaffolding protein CASK to downstream intracellular effectors. The protein is Caskin-1 (Caskin1) of Mus musculus (Mouse).